The chain runs to 140 residues: Translation initiation factor 2 subunit beta (140 aa).

This sequence belongs to the eIF-2-beta/eIF-5 family. In terms of assembly, heterotrimer composed of an alpha, a beta and a gamma chain.

In terms of biological role, eIF-2 functions in the early steps of protein synthesis by forming a ternary complex with GTP and initiator tRNA. In Pyrococcus furiosus (strain ATCC 43587 / DSM 3638 / JCM 8422 / Vc1), this protein is Translation initiation factor 2 subunit beta.